A 567-amino-acid polypeptide reads, in one-letter code: Urease subunit alpha (567 aa).

Histidine 134, histidine 136, and lysine 217 together coordinate Ni(2+). An N6-carboxylysine modification is found at lysine 217. Histidine 219 serves as a coordination point for substrate. Positions 246 and 272 each coordinate Ni(2+). The active-site Proton donor is histidine 320. Aspartate 360 provides a ligand contact to Ni(2+).

It belongs to the metallo-dependent hydrolases superfamily. Urease alpha subunit family. As to quaternary structure, heterotrimer of UreA (gamma), UreB (beta) and UreC (alpha) subunits. Three heterotrimers associate to form the active enzyme. It depends on Ni cation as a cofactor. In terms of processing, carboxylation allows a single lysine to coordinate two nickel ions.

Its subcellular location is the cytoplasm. The enzyme catalyses urea + 2 H2O + H(+) = hydrogencarbonate + 2 NH4(+). It functions in the pathway nitrogen metabolism; urea degradation; CO(2) and NH(3) from urea (urease route): step 1/1. The protein is Urease subunit alpha of Polynucleobacter asymbioticus (strain DSM 18221 / CIP 109841 / QLW-P1DMWA-1) (Polynucleobacter necessarius subsp. asymbioticus).